We begin with the raw amino-acid sequence, 106 residues long: MNDSEFHRLADGLWMTIEERLDAWDGDSDIDCEINGGVLTLSFENGSKIIINRQEPLHQVWLATKQGGYHFDYKNDEWICDRSGERFWDLLETAATQQAGEAVSFR.

It belongs to the frataxin family.

Functionally, involved in iron-sulfur (Fe-S) cluster assembly. May act as a regulator of Fe-S biogenesis. The sequence is that of Iron-sulfur cluster assembly protein CyaY from Cronobacter sakazakii (strain ATCC BAA-894) (Enterobacter sakazakii).